We begin with the raw amino-acid sequence, 1146 residues long: Lysine-specific demethylase 2A (1146 aa).

Residues F146–D314 form the JmjC domain. T207 is a binding site for substrate. 2 residues coordinate Fe cation: H210 and D212. Position 227 (K227) interacts with substrate. H282 is a binding site for Fe cation. Disordered stretches follow at residues L363–P467 and T554–A585. The segment covering S373 to S387 has biased composition (low complexity). Residues D388–E401 show a composition bias toward acidic residues. A compositionally biased stretch (basic and acidic residues) spans G402–I442. The segment covering L453 to P467 has biased composition (pro residues). Residues S566–G584 are compositionally biased toward low complexity. Residues A585–L631 form a CXXC-type zinc finger. Positions 592, 595, 598, 603, 606, 609, 625, and 630 each coordinate Zn(2+). A PHD-type zinc finger spans residues S638–G699. 2 disordered regions span residues V733–R800 and T832–M867. Residues G739–P762 show a composition bias toward pro residues. Over residues S772 to H789 the composition is skewed to basic and acidic residues. A compositionally biased stretch (acidic residues) spans E849–E864. The region spanning S874–V919 is the F-box domain. LRR repeat units lie at residues W945–L966, L968–W994, G1032–H1057, C1058–G1087, C1088–G1112, and C1113–D1138.

Belongs to the JHDM1 histone demethylase family. Fe(2+) is required as a cofactor.

The protein localises to the nucleus. Its subcellular location is the nucleoplasm. It carries out the reaction N(6),N(6)-dimethyl-L-lysyl(36)-[histone H3] + 2 2-oxoglutarate + 2 O2 = L-lysyl(36)-[histone H3] + 2 formaldehyde + 2 succinate + 2 CO2. In terms of biological role, histone demethylase that specifically demethylates 'Lys-36' of histone H3, thereby playing a central role in histone code. Preferentially demethylates dimethylated H3 'Lys-36' residue while it has weak or no activity for mono- and tri-methylated H3 'Lys-36'. May also recognize and bind to some phosphorylated proteins and promote their ubiquitination and degradation. Required to maintain the heterochromatic state. Associates with centromeres and represses transcription of small non-coding RNAs that are encoded by the clusters of satellite repeats at the centromere. Required to sustain centromeric integrity and genomic stability, particularly during mitosis. May play a role in the regulation of circadian gene expression. The polypeptide is Lysine-specific demethylase 2A (kdm2a) (Xenopus tropicalis (Western clawed frog)).